We begin with the raw amino-acid sequence, 114 residues long: Iron-sulfur cluster insertion protein ErpA (114 aa).

Residues Cys42, Cys106, and Cys108 each coordinate iron-sulfur cluster.

The protein belongs to the HesB/IscA family. In terms of assembly, homodimer. It depends on iron-sulfur cluster as a cofactor.

In terms of biological role, required for insertion of 4Fe-4S clusters for at least IspG. The chain is Iron-sulfur cluster insertion protein ErpA from Serratia proteamaculans (strain 568).